Here is a 504-residue protein sequence, read N- to C-terminus: D-alanine--D-alanyl carrier protein ligase (504 aa).

152–153 (TS) is a binding site for ATP. D197 contributes to the D-alanine binding site. Position 292 to 297 (292 to 297 (NTYGPT)) interacts with ATP. V301 serves as a coordination point for D-alanine. Residues D383, 394–397 (YNGR), and K492 contribute to the ATP site. K492 lines the D-alanine pocket.

The protein belongs to the ATP-dependent AMP-binding enzyme family. DltA subfamily.

The protein localises to the cytoplasm. It carries out the reaction holo-[D-alanyl-carrier protein] + D-alanine + ATP = D-alanyl-[D-alanyl-carrier protein] + AMP + diphosphate. Its pathway is cell wall biogenesis; lipoteichoic acid biosynthesis. Catalyzes the first step in the D-alanylation of lipoteichoic acid (LTA), the activation of D-alanine and its transfer onto the D-alanyl carrier protein (Dcp) DltC. In an ATP-dependent two-step reaction, forms a high energy D-alanyl-AMP intermediate, followed by transfer of the D-alanyl residue as a thiol ester to the phosphopantheinyl prosthetic group of the Dcp. D-alanylation of LTA plays an important role in modulating the properties of the cell wall in Gram-positive bacteria, influencing the net charge of the cell wall. This Bacillus cereus (strain AH187) protein is D-alanine--D-alanyl carrier protein ligase.